A 364-amino-acid chain; its full sequence is Flavonoid 3'-O-methyltransferase 3 (364 aa).

Asp232 contacts S-adenosyl-L-methionine. The active-site Proton acceptor is His270.

The protein belongs to the class I-like SAM-binding methyltransferase superfamily. Cation-independent O-methyltransferase family. In terms of assembly, homodimer.

The catalysed reaction is quercetin + S-adenosyl-L-methionine = isorhamnetin + S-adenosyl-L-homocysteine + H(+). The enzyme catalyses luteolin + S-adenosyl-L-methionine = chrysoeriol + S-adenosyl-L-homocysteine + H(+). It catalyses the reaction a 3'-hydroxyflavone + S-adenosyl-L-methionine = a 3'-methoxyflavone + S-adenosyl-L-homocysteine + H(+). It carries out the reaction rhamnetin + S-adenosyl-L-methionine = rhamnacene + S-adenosyl-L-homocysteine + H(+). The catalysed reaction is 3',4',7,8-tetrahydroxyflavone + S-adenosyl-L-methionine = 4',7,8-trihydroxy-3'-methoxyflavone-7-olate + S-adenosyl-L-homocysteine + H(+). The enzyme catalyses taxifolin + S-adenosyl-L-methionine = taxifolin 3'-methyl ether + S-adenosyl-L-homocysteine + H(+). It participates in flavonoid metabolism. Functionally, flavonoid 3'-O-methyltransferase involved in the biosynthesis of polymethoxylated flavonoids natural products such as pebrellin, aroma compounds which contribute to the flavor of peppermint, and exhibit pharmacological activities such as anti-allergic, anti-oxidant, antibacterial, anti-proliferative, and anti-inflammatory effects. Catalyzes S-adenosylmethionine-dependent regioselective 3'-O-methylation of flavonoids; active on various hydroxylated flavonoid substrates, including quercetin, rhamnetin, luteolin (LUT), 7,8,3'4'-tetrahydroxy-flavone and taxifolin, and, with a lower efficiency, eupatorin and hesperetin. The chain is Flavonoid 3'-O-methyltransferase 3 from Mentha piperita (Peppermint).